The following is a 120-amino-acid chain: Large ribosomal subunit protein bL12 (120 aa).

This sequence belongs to the bacterial ribosomal protein bL12 family. In terms of assembly, homodimer. Part of the ribosomal stalk of the 50S ribosomal subunit. Forms a multimeric L10(L12)X complex, where L10 forms an elongated spine to which 2 to 4 L12 dimers bind in a sequential fashion. Binds GTP-bound translation factors.

Its function is as follows. Forms part of the ribosomal stalk which helps the ribosome interact with GTP-bound translation factors. Is thus essential for accurate translation. In Listeria innocua serovar 6a (strain ATCC BAA-680 / CLIP 11262), this protein is Large ribosomal subunit protein bL12.